The following is an 837-amino-acid chain: Outer membrane usher protein HifC (837 aa).

The N-terminal stretch at 1–26 (MKTKNFPLNKIAFACTLLLANPVAWA) is a signal peptide. A disulfide bridge links Cys-813 with Cys-833.

This sequence belongs to the fimbrial export usher family.

The protein localises to the cell outer membrane. Its function is as follows. Essential for piliation. This Haemophilus influenzae protein is Outer membrane usher protein HifC (hifC).